A 165-amino-acid chain; its full sequence is Large ribosomal subunit protein uL10 (165 aa).

It belongs to the universal ribosomal protein uL10 family. In terms of assembly, part of the ribosomal stalk of the 50S ribosomal subunit. The N-terminus interacts with L11 and the large rRNA to form the base of the stalk. The C-terminus forms an elongated spine to which L12 dimers bind in a sequential fashion forming a multimeric L10(L12)X complex.

Forms part of the ribosomal stalk, playing a central role in the interaction of the ribosome with GTP-bound translation factors. The polypeptide is Large ribosomal subunit protein uL10 (Mycoplasma capricolum subsp. capricolum (strain California kid / ATCC 27343 / NCTC 10154)).